A 497-amino-acid polypeptide reads, in one-letter code: L-amino-acid oxidase BjussuLAAO-I (497 aa).

An N-terminal signal peptide occupies residues 1–13; the sequence is MNVFFMFSKPGKL. The cysteines at positions 23 and 186 are disulfide-linked. FAD is bound by residues 56-57, 76-77, 76-80, Gln-84, and 100-103; these read MS, EA, EASER, and GPMR. Arg-103 serves as a coordination point for substrate. Residue Asn-185 is glycosylated (N-linked (GlcNAc...) asparagine). His-236 lines the substrate pocket. Residue Val-274 participates in FAD binding. A disulfide bridge connects residues Cys-344 and Cys-425. Tyr-385 is a binding site for substrate. Residues Glu-470, 477 to 482, and 478 to 482 contribute to the FAD site; these read GWIAST and WIAST. 477–478 is a binding site for substrate; sequence GW.

It belongs to the flavin monoamine oxidase family. FIG1 subfamily. In terms of assembly, homodimer; non-covalently linked. FAD is required as a cofactor. Expressed by the venom gland.

It is found in the secreted. The catalysed reaction is an L-alpha-amino acid + O2 + H2O = a 2-oxocarboxylate + H2O2 + NH4(+). The enzyme catalyses L-leucine + O2 + H2O = 4-methyl-2-oxopentanoate + H2O2 + NH4(+). It carries out the reaction L-phenylalanine + O2 + H2O = 3-phenylpyruvate + H2O2 + NH4(+). It catalyses the reaction L-tryptophan + O2 + H2O = indole-3-pyruvate + H2O2 + NH4(+). The catalysed reaction is L-methionine + O2 + H2O = 4-methylsulfanyl-2-oxobutanoate + H2O2 + NH4(+). The enzyme catalyses L-isoleucine + O2 + H2O = (S)-3-methyl-2-oxopentanoate + H2O2 + NH4(+). It carries out the reaction L-tyrosine + O2 + H2O = 3-(4-hydroxyphenyl)pyruvate + H2O2 + NH4(+). It catalyses the reaction L-cysteine + O2 + H2O = 2-oxo-3-sulfanylpropanoate + H2O2 + NH4(+). In terms of biological role, catalyzes an oxidative deamination of predominantly hydrophobic and aromatic L-amino acids, thus producing hydrogen peroxide that may contribute to the diverse toxic effects of this enzyme. Shows high specificity for L-Met, L-Leu, L-Phe, L-Tyr, L-Ile, L-Trp, a moderate activity on L-Cys and low activity on L-Val, L-Lys, L-Arg, L-His, L-Gln, L-Thr and L-Ser. Exhibits diverse biological activities, such as hemorrhage, hemolysis, edema, apoptosis of vascular endothelial cells or tumor cell lines, and antibacterial, as well as regulation of platelet aggregation. Effects of snake L-amino oxidases on platelets are controversial, since they either induce aggregation or inhibit agonist-induced aggregation. These different effects are probably due to different experimental conditions. In vitro, shows parasiticidal activities against both trypanosomes and leishmania, as a result of enzyme-catalyzed hydrogen peroxide production. This is L-amino-acid oxidase BjussuLAAO-I from Bothrops jararacussu (Jararacussu).